We begin with the raw amino-acid sequence, 188 residues long: Crossover junction endodeoxyribonuclease RuvC (188 aa).

Residues D7, E68, and D141 contribute to the active site. Mg(2+) contacts are provided by D7, E68, and D141.

Belongs to the RuvC family. Homodimer which binds Holliday junction (HJ) DNA. The HJ becomes 2-fold symmetrical on binding to RuvC with unstacked arms; it has a different conformation from HJ DNA in complex with RuvA. In the full resolvosome a probable DNA-RuvA(4)-RuvB(12)-RuvC(2) complex forms which resolves the HJ. It depends on Mg(2+) as a cofactor.

It is found in the cytoplasm. The catalysed reaction is Endonucleolytic cleavage at a junction such as a reciprocal single-stranded crossover between two homologous DNA duplexes (Holliday junction).. Its function is as follows. The RuvA-RuvB-RuvC complex processes Holliday junction (HJ) DNA during genetic recombination and DNA repair. Endonuclease that resolves HJ intermediates. Cleaves cruciform DNA by making single-stranded nicks across the HJ at symmetrical positions within the homologous arms, yielding a 5'-phosphate and a 3'-hydroxyl group; requires a central core of homology in the junction. The consensus cleavage sequence is 5'-(A/T)TT(C/G)-3'. Cleavage occurs on the 3'-side of the TT dinucleotide at the point of strand exchange. HJ branch migration catalyzed by RuvA-RuvB allows RuvC to scan DNA until it finds its consensus sequence, where it cleaves and resolves the cruciform DNA. The protein is Crossover junction endodeoxyribonuclease RuvC of Mycobacterium tuberculosis (strain ATCC 25177 / H37Ra).